The chain runs to 206 residues: Small ribosomal subunit protein uS7 (206 aa).

Over residues 1–19 (MSAEDTPEADADAAEESEP) the composition is skewed to acidic residues. Residues 1–25 (MSAEDTPEADADAAEESEPETARAK) are disordered. Serine 2 bears the N-acetylserine mark.

This sequence belongs to the universal ribosomal protein uS7 family. In terms of assembly, part of the 30S ribosomal subunit.

In terms of biological role, one of the primary rRNA binding proteins, it binds directly to 16S rRNA where it nucleates assembly of the head domain of the 30S subunit. Is located at the subunit interface close to the decoding center. In Haloarcula marismortui (strain ATCC 43049 / DSM 3752 / JCM 8966 / VKM B-1809) (Halobacterium marismortui), this protein is Small ribosomal subunit protein uS7.